We begin with the raw amino-acid sequence, 721 residues long: YTH domain-containing protein 1 (721 aa).

Acidic residues predominate over residues 29–38 (EADIAEELQD). A disordered region spans residues 29–239 (EADIAEELQD…GGGTHSHSQK (211 aa)). Over residues 48-75 (SESNGGDSSDSEPSISSVSTATSSLAGS) the composition is skewed to low complexity. The segment covering 135–151 (ASDKVKSKSPDTEDRQP) has biased composition (basic and acidic residues). One can recognise a YTH domain in the interval 254–391 (TRFFLIKSNN…KIGGELCRLF (138 aa)). RNA-binding positions include 260 to 262 (KSN), tryptophan 276, and tryptophan 327. Disordered stretches follow at residues 424-471 (PPRS…RHHH), 580-605 (DGPG…DKAP), and 651-721 (AGGG…DNRR). A compositionally biased stretch (gly residues) spans 432-443 (GHGGGGRGGGRG). Residues 451-471 (PMRHKRSYHGAPHHRPYRHHH) are compositionally biased toward basic residues. A compositionally biased stretch (pro residues) spans 583–600 (GAPPLPDYPPPQRPPPPG). A compositionally biased stretch (gly residues) spans 651–670 (AGGGMGAGGGSGGGMGGPGG). Positions 699 to 708 (RDSRPFRERG) are enriched in basic and acidic residues.

The protein localises to the nucleus. Functionally, regulator of alternative splicing that specifically recognizes and binds N6-methyladenosine (m6A)-containing RNAs. Acts by acting as a reader of m6A methylation. Required for sex determination and dosage compensation via Sxl alternative splicing: m6A methylation acts as a key regulator of Sxl pre-mRNA and promotes female-specific alternative splicing of Sxl, which determines female physiognomy. M6A methylation is also required for neuronal functions. This Drosophila melanogaster (Fruit fly) protein is YTH domain-containing protein 1.